A 954-amino-acid polypeptide reads, in one-letter code: Glycine dehydrogenase (decarboxylating) (954 aa).

Lysine 706 carries the post-translational modification N6-(pyridoxal phosphate)lysine.

This sequence belongs to the GcvP family. The glycine cleavage system is composed of four proteins: P, T, L and H. Requires pyridoxal 5'-phosphate as cofactor.

It carries out the reaction N(6)-[(R)-lipoyl]-L-lysyl-[glycine-cleavage complex H protein] + glycine + H(+) = N(6)-[(R)-S(8)-aminomethyldihydrolipoyl]-L-lysyl-[glycine-cleavage complex H protein] + CO2. Its function is as follows. The glycine cleavage system catalyzes the degradation of glycine. The P protein binds the alpha-amino group of glycine through its pyridoxal phosphate cofactor; CO(2) is released and the remaining methylamine moiety is then transferred to the lipoamide cofactor of the H protein. The protein is Glycine dehydrogenase (decarboxylating) of Pseudomonas savastanoi pv. phaseolicola (strain 1448A / Race 6) (Pseudomonas syringae pv. phaseolicola (strain 1448A / Race 6)).